The primary structure comprises 1237 residues: Cilia- and flagella-associated protein 61 (1237 aa).

The interval 278–301 is disordered; the sequence is QDLSVRRSQDAELRSSSQGSQKIV. Basic and acidic residues predominate over residues 281 to 290; the sequence is SVRRSQDAEL.

In terms of assembly, component of axonemal radial spokes, the protein complexes that link the outer microtubule doublets with the central pair of microtubules. Interacts with CFAP91/MAATS1, ODAD2/ARMC4, RSPH3A, ROPN1, ROPN1L and RSPH9. Interacts with DYNLT1, DYNC1I2 and TUBB3. Interacts with WDR35, IFT22 and IFT81.

The protein localises to the cytoplasm. Its subcellular location is the cytoskeleton. The protein resides in the flagellum axoneme. Functionally, involved in sperm flagellum assembly. Plays an essential role in the formation of the radial spokes in flagellum axoneme. This Homo sapiens (Human) protein is Cilia- and flagella-associated protein 61.